The following is a 115-amino-acid chain: Peptidyl-tRNA hydrolase (115 aa).

Belongs to the PTH2 family.

The protein localises to the cytoplasm. The catalysed reaction is an N-acyl-L-alpha-aminoacyl-tRNA + H2O = an N-acyl-L-amino acid + a tRNA + H(+). Its function is as follows. The natural substrate for this enzyme may be peptidyl-tRNAs which drop off the ribosome during protein synthesis. This Nanoarchaeum equitans (strain Kin4-M) protein is Peptidyl-tRNA hydrolase (pth).